A 113-amino-acid chain; its full sequence is uncharacterized protein (113 aa).

Positions 1–20 (MMKKSILAFLLLTSSAAALA) are cleaved as a signal peptide.

This is an uncharacterized protein from Escherichia coli (strain K12).